Reading from the N-terminus, the 290-residue chain is MAEKQQAVAEFYDNSTGAWEVFFGDHLHDGFYDPGTTATIAGSRAAVVRMIDEALRFANISDDPAKKPKTMLDVGCGIGGTCLHVAKKYGIQCKGITISSEQVKCAQGFAEEQGLEKKVSFDVGDALDMPYKDGTFDLVFTIQCIEHIQDKEKFIREMVRVAAPGAPIVIVSYAHRNLSPSEGSLKPEEKKVLKKICDNIVLSWVCSSADYVRWLTPLPVEDIKAADWTQNITPFYPLLMKEAFTWKGFTSLLMKGGWSAIKVVLAVRMMAKAADDGVLKFVAVTCRKSK.

Residues 71–80 (MLDVGCGIGG) are SAM motif I. Positions 133 to 139 (DGTFDLV) match the Vacuolar targeting signal motif. An SAM motif II region spans residues 134–142 (GTFDLVFTI). The interval 161–170 (VAAPGAPIVI) is SAM motif III.

It belongs to the class I-like SAM-binding methyltransferase superfamily. gTMT family. Homodimer. As to expression, accumulates in tissues actively synthesizing monoterpenoid indole alkaloids (MIAs) (at protein level). Mainly expressed in young leaves and, to a lower extent, in roots and stems.

It localises to the vacuole membrane. The enzyme catalyses picrinine + S-adenosyl-L-methionine = ervincine + S-adenosyl-L-homocysteine + H(+). It participates in alkaloid biosynthesis; vindoline biosynthesis. In terms of biological role, S-adenosyl-L-methionine-dependent N-methyltransferase involved in the biosynthesis of biologically active monoterpenoid indole alkaloids (MIAs) natural products including vindoline. Catalyzes the conversion of picrinine to N-methylpicrinine (ervincine). Also accepts, with low efficiency, 21-hydroxycyclolochnericine and norajmaline as substrates. The protein is Picrinine-N-methytransferase of Rauvolfia serpentina (Serpentine wood).